Reading from the N-terminus, the 50-residue chain is Mating-type pheromone BAP1(1) (50 aa).

Positions 1 to 32 (MDGEGHDINIWGARMSPSPAAAPVSATRGAPW) are disordered. A compositionally biased stretch (low complexity) spans 16–26 (SPSPAAAPVSA). At C47 the chain carries Cysteine methyl ester. The S-farnesyl cysteine moiety is linked to residue C47. The propeptide at 48–50 (VCH) is removed in mature form.

Its subcellular location is the cell membrane. In terms of biological role, activates B-regulated development. The protein is Mating-type pheromone BAP1(1) (BAP1(1)) of Schizophyllum commune (Split gill fungus).